The chain runs to 524 residues: Serine/threonine-protein phosphatase 2A 56 kDa regulatory subunit gamma isoform (524 aa).

An N-acetylmethionine modification is found at Met1. The Nuclear localization signal motif lies at 472 to 489 (RKTVSDEARQAQKDPKKE). A disordered region spans residues 476-524 (SDEARQAQKDPKKERPLARRKSELPQDPHTKKALEAHCRADELVPQDGR).

Belongs to the phosphatase 2A regulatory subunit B56 family. PP2A consists of a common heterodimeric core enzyme, composed of PPP2CA a 36 kDa catalytic subunit (subunit C) and PPP2R1A a 65 kDa constant regulatory subunit (PR65 or subunit A), that associates with a variety of regulatory subunits. Proteins that associate with the core dimer include three families of regulatory subunits B (the R2/B/PR55/B55, R3/B''/PR72/PR130/PR59 and R5/B'/B56 families), the 48 kDa variable regulatory subunit, viral proteins, and cell signaling molecules. Interacts with SGO1. Interacts with SGO1; the interaction is direct. May interact with TP53. Interacts with IER3 and/or ERK kinases; regulates ERK dephosphorylation Interacts with CIP2A; this interaction stabilizes CIP2A. As to expression, highly expressed in testis, heart and spleen. Also found in brain and skeletal muscle.

The protein resides in the nucleus. Its subcellular location is the chromosome. The protein localises to the centromere. Its function is as follows. The B regulatory subunit might modulate substrate selectivity and catalytic activity, and might also direct the localization of the catalytic enzyme to a particular subcellular compartment. The PP2A-PPP2R5C holoenzyme may activate TP53 and play a role in DNA damage-induced inhibition of cell proliferation. PP2A-PPP2R5C may also regulate the ERK signaling pathway through ERK dephosphorylation. In Oryctolagus cuniculus (Rabbit), this protein is Serine/threonine-protein phosphatase 2A 56 kDa regulatory subunit gamma isoform (PPP2R5C).